The primary structure comprises 177 residues: Parathyroid hormone-related protein (177 aa).

The N-terminal stretch at 1 to 24 (MLRRLVQQWGVAVFLLSYSVPSCG) is a signal peptide. A propeptide spanning residues 25–34 (RSVEELGRRL) is cleaved from the precursor. The tract at residues 57-68 (RFFLHHLIAEIH) is important for receptor binding. The disordered stretch occupies residues 74–177 (ATSEVSPNSK…TSLELNLRRH (104 aa)). The segment covering 76–90 (SEVSPNSKPAPNTKN) has biased composition (polar residues). Positions 108-129 (TNKVETYKEQPLKTPGKKKKGK) match the Nuclear localization signal motif. The segment covering 109-118 (NKVETYKEQP) has biased composition (basic and acidic residues). A compositionally biased stretch (basic residues) spans 122–132 (PGKKKKGKPGK).

This sequence belongs to the parathyroid hormone family. As to quaternary structure, PTHrP interacts with PTH1R (via N-terminal extracellular domain). Post-translationally, there are several secretory forms, including osteostatin, arising from endoproteolytic cleavage of the initial translation product. Each of these secretory forms is believed to have one or more of its own receptors that mediates the normal paracrine, autocrine and endocrine actions.

The protein localises to the secreted. The protein resides in the cytoplasm. Its subcellular location is the nucleus. Neuroendocrine peptide which is a critical regulator of cellular and organ growth, development, migration, differentiation and survival and of epithelial calcium ion transport. Acts by binding to its receptor, PTH1R, activating G protein-coupled receptor signaling. Regulates endochondral bone development and epithelial-mesenchymal interactions during the formation of the mammary glands and teeth. Required for skeletal homeostasis. Promotes mammary mesenchyme differentiation and bud outgrowth by modulating mesenchymal cell responsiveness to BMPs. Up-regulates BMPR1A expression in the mammary mesenchyme and this increases the sensitivity of these cells to BMPs and allows them to respond to BMP4 in a paracrine and/or autocrine fashion. BMP4 signaling in the mesenchyme, in turn, triggers epithelial outgrowth and augments MSX2 expression, which causes the mammary mesenchyme to inhibit hair follicle formation within the nipple sheath. Its function is as follows. Potent inhibitor of osteoclastic bone resorption. This is Parathyroid hormone-related protein (PTHLH) from Canis lupus familiaris (Dog).